We begin with the raw amino-acid sequence, 57 residues long: Large ribosomal subunit protein bL32 (57 aa).

This sequence belongs to the bacterial ribosomal protein bL32 family.

The chain is Large ribosomal subunit protein bL32 from Bacillus pumilus (strain SAFR-032).